Reading from the N-terminus, the 148-residue chain is Large ribosomal subunit protein uL15 (148 aa).

Over residues 1–10 the composition is skewed to basic and acidic residues; sequence MQLHNLEYKK. Positions 1–42 are disordered; sequence MQLHNLEYKKGSRNHKEKRVGRGHGSGLGKTSGRGQDGQKAR. Residues 11–22 are compositionally biased toward basic residues; that stretch reads GSRNHKEKRVGR. Residues 23–36 are compositionally biased toward gly residues; the sequence is GHGSGLGKTSGRGQ.

This sequence belongs to the universal ribosomal protein uL15 family. As to quaternary structure, part of the 50S ribosomal subunit.

In terms of biological role, binds to the 23S rRNA. The sequence is that of Large ribosomal subunit protein uL15 from Ureaplasma urealyticum serovar 10 (strain ATCC 33699 / Western).